A 564-amino-acid polypeptide reads, in one-letter code: Dihydropyrimidinase-related protein 5 (564 aa).

Residues T509 and T514 each carry the phosphothreonine modification. Phosphoserine is present on residues S532 and S538. Omega-N-methylarginine is present on R559.

Belongs to the metallo-dependent hydrolases superfamily. Hydantoinase/dihydropyrimidinase family. Homotetramer, and heterotetramer with other DPYS-like proteins. Interacts with DPYSL2, DPYSL3 and DPYSL4. Interacts with MAP2 and TUBB3.

It localises to the cytoplasm. Its function is as follows. Involved in the negative regulation of dendrite outgrowth. This is Dihydropyrimidinase-related protein 5 (DPYSL5) from Homo sapiens (Human).